The sequence spans 496 residues: Aspartic proteinase (496 aa).

A signal peptide spans 1-24 (MAKRHLLLVTTCLWALSCALLLHA). Residues 25 to 59 (SSDGFLRVNLNKKRLDKEDLTAAKLAQQGNRLLKT) constitute a propeptide, activation peptide. The region spanning 77 to 493 (YYGVIGLGSP…DFGKDRIGFA (417 aa)) is the Peptidase A1 domain. The active site involves aspartate 95. 2 disulfides stabilise this stretch: cysteine 108–cysteine 114 and cysteine 273–cysteine 277. Aspartate 282 is a catalytic residue. The 101-residue stretch at 307-407 (IISTECKEVV…NQLCERLPSP (101 aa)) folds into the Saposin B-type domain. Intrachain disulfides connect cysteine 312/cysteine 401, cysteine 337/cysteine 373, cysteine 343/cysteine 370, and cysteine 415/cysteine 452. N-linked (GlcNAc...) asparagine glycosylation occurs at asparagine 387.

The protein belongs to the peptidase A1 family.

It is found in the vacuole. Functionally, involved in the breakdown of propeptides of storage proteins in protein-storage vacuoles. This Oryza sativa subsp. japonica (Rice) protein is Aspartic proteinase (RAP).